The sequence spans 501 residues: MTDTQNKNYIIALDQGTTSSRAIIFDRDANVVSTAQSEFVQHYPQAGWVEHDPMEIFATQTACMTKALAQADLHHNQIAAIGITNQRETTVIWERDTGRPIYNAIVWQCRRSTEICQQLKRDGLEEYIKDTTGLVIDPYFSGSKVKWILDNVEGSRERARKGELMFGTIDTWLIWKFTGGKVHVTDYTNASRTMLFNIHTLEWDQRMLDVLDIPREMLPEVKASSEVYGHSKSGIPIAGIAGDQQAALFGQMCVEPGQAKNTYGTGCFLLMNTGKKAVKSAHGMLTTIGCGPRGEVAYALEGAVFNGGSTVQWLRDELKLINDALDTEYFAGKVKDSNGVYLVPAFTGLGAPYWDPYARGALFGLTRGVKVDHIIRAALESIAYQTRDVLDAMQQDSGERLKSLRVDGGAVANNFLMQFQADILGTHVERPQMRETTALGAAFLAGLAIGFWSSLDELRNKAVIERVFEPSCEEAHREKLYAGWQKAVARTRDWEPHENEE.

ADP is bound at residue Thr-17. The ATP site is built by Thr-17, Thr-18, and Ser-19. Thr-17 provides a ligand contact to sn-glycerol 3-phosphate. Residue Arg-21 coordinates ADP. The sn-glycerol 3-phosphate site is built by Arg-87, Glu-88, Tyr-139, and Asp-243. The glycerol site is built by Arg-87, Glu-88, Tyr-139, Asp-243, and Gln-244. Thr-265 and Gly-308 together coordinate ADP. ATP-binding residues include Thr-265, Gly-308, Gln-312, and Gly-409. Residues Gly-409 and Asn-413 each contribute to the ADP site.

Belongs to the FGGY kinase family.

The enzyme catalyses glycerol + ATP = sn-glycerol 3-phosphate + ADP + H(+). It participates in polyol metabolism; glycerol degradation via glycerol kinase pathway; sn-glycerol 3-phosphate from glycerol: step 1/1. Inhibited by fructose 1,6-bisphosphate (FBP). Its function is as follows. Key enzyme in the regulation of glycerol uptake and metabolism. Catalyzes the phosphorylation of glycerol to yield sn-glycerol 3-phosphate. The polypeptide is Glycerol kinase (Pseudomonas syringae pv. syringae (strain B728a)).